A 163-amino-acid chain; its full sequence is MAIFGEAETWVAIAFVILLGVFAYLGVHRTVLQALDKRRDRIKAELDEARKLKDEAAKLLADYRARRASAEREAQAIVDSAKADAERIAAEAKAKLEDFVARRTKTAESKIALAEAQALADVRAAAAEAAVAAASRILSESVKGNLADELLSKGIQEVRGKLN.

The helical transmembrane segment at 7–27 threads the bilayer; the sequence is AETWVAIAFVILLGVFAYLGV.

It belongs to the ATPase B chain family. In terms of assembly, F-type ATPases have 2 components, F(1) - the catalytic core - and F(0) - the membrane proton channel. F(1) has five subunits: alpha(3), beta(3), gamma(1), delta(1), epsilon(1). F(0) has three main subunits: a(1), b(2) and c(10-14). The alpha and beta chains form an alternating ring which encloses part of the gamma chain. F(1) is attached to F(0) by a central stalk formed by the gamma and epsilon chains, while a peripheral stalk is formed by the delta and b chains.

Its subcellular location is the cell inner membrane. Its function is as follows. F(1)F(0) ATP synthase produces ATP from ADP in the presence of a proton or sodium gradient. F-type ATPases consist of two structural domains, F(1) containing the extramembraneous catalytic core and F(0) containing the membrane proton channel, linked together by a central stalk and a peripheral stalk. During catalysis, ATP synthesis in the catalytic domain of F(1) is coupled via a rotary mechanism of the central stalk subunits to proton translocation. Component of the F(0) channel, it forms part of the peripheral stalk, linking F(1) to F(0). In Rhodopseudomonas palustris (strain ATCC BAA-98 / CGA009), this protein is ATP synthase subunit b 1.